The sequence spans 135 residues: ATP synthase epsilon chain (135 aa).

Belongs to the ATPase epsilon chain family. As to quaternary structure, F-type ATPases have 2 components, CF(1) - the catalytic core - and CF(0) - the membrane proton channel. CF(1) has five subunits: alpha(3), beta(3), gamma(1), delta(1), epsilon(1). CF(0) has three main subunits: a, b and c.

It localises to the cell inner membrane. In terms of biological role, produces ATP from ADP in the presence of a proton gradient across the membrane. This is ATP synthase epsilon chain from Rhizobium leguminosarum bv. trifolii (strain WSM2304).